Here is an 800-residue protein sequence, read N- to C-terminus: Endoglucanase (800 aa).

An N-terminal signal peptide occupies residues M1–A30. E190 serves as the catalytic Proton donor. The Nucleophile role is filled by E305. Residues A761 to E800 form a disordered region. Residues V767–P780 show a composition bias toward acidic residues. Over residues V781–E800 the composition is skewed to basic and acidic residues.

Belongs to the glycosyl hydrolase 5 (cellulase A) family.

It carries out the reaction Endohydrolysis of (1-&gt;4)-beta-D-glucosidic linkages in cellulose, lichenin and cereal beta-D-glucans.. The protein is Endoglucanase of Halalkalibacter akibai (strain ATCC 43226 / DSM 21942 / CIP 109018 / JCM 9157 / 1139) (Bacillus akibai).